The chain runs to 241 residues: Ribosome assembly factor mrt4 (241 aa).

The protein belongs to the universal ribosomal protein uL10 family. In terms of assembly, associates with the pre-60S ribosomal particle.

The protein localises to the nucleus. It localises to the nucleolus. Its subcellular location is the cytoplasm. Component of the ribosome assembly machinery. Nuclear paralog of the ribosomal protein P0, it binds pre-60S subunits at an early stage of assembly in the nucleolus, and is replaced by P0 in cytoplasmic pre-60S subunits and mature 80S ribosomes. The polypeptide is Ribosome assembly factor mrt4 (Schizosaccharomyces pombe (strain 972 / ATCC 24843) (Fission yeast)).